The following is a 347-amino-acid chain: Phenylalanine--tRNA ligase alpha subunit (347 aa).

Position 262 (Glu262) interacts with Mg(2+).

It belongs to the class-II aminoacyl-tRNA synthetase family. Phe-tRNA synthetase alpha subunit type 1 subfamily. Tetramer of two alpha and two beta subunits. Requires Mg(2+) as cofactor.

It localises to the cytoplasm. The catalysed reaction is tRNA(Phe) + L-phenylalanine + ATP = L-phenylalanyl-tRNA(Phe) + AMP + diphosphate + H(+). This chain is Phenylalanine--tRNA ligase alpha subunit, found in Roseiflexus sp. (strain RS-1).